The sequence spans 502 residues: ATP synthase subunit alpha (502 aa).

170 to 177 contributes to the ATP binding site; it reads GDRKTGKT.

It belongs to the ATPase alpha/beta chains family. As to quaternary structure, F-type ATPases have 2 components, CF(1) - the catalytic core - and CF(0) - the membrane proton channel. CF(1) has five subunits: alpha(3), beta(3), gamma(1), delta(1), epsilon(1). CF(0) has four main subunits: a, b, b' and c.

It localises to the cellular thylakoid membrane. The catalysed reaction is ATP + H2O + 4 H(+)(in) = ADP + phosphate + 5 H(+)(out). Functionally, produces ATP from ADP in the presence of a proton gradient across the membrane. The alpha chain is a regulatory subunit. In Microcystis aeruginosa (strain NIES-843 / IAM M-2473), this protein is ATP synthase subunit alpha.